The primary structure comprises 167 residues: SsrA-binding protein (167 aa).

The span at glutamine 139–arginine 158 shows a compositional bias: basic and acidic residues. The interval glutamine 139–alanine 167 is disordered.

Belongs to the SmpB family.

The protein localises to the cytoplasm. Required for rescue of stalled ribosomes mediated by trans-translation. Binds to transfer-messenger RNA (tmRNA), required for stable association of tmRNA with ribosomes. tmRNA and SmpB together mimic tRNA shape, replacing the anticodon stem-loop with SmpB. tmRNA is encoded by the ssrA gene; the 2 termini fold to resemble tRNA(Ala) and it encodes a 'tag peptide', a short internal open reading frame. During trans-translation Ala-aminoacylated tmRNA acts like a tRNA, entering the A-site of stalled ribosomes, displacing the stalled mRNA. The ribosome then switches to translate the ORF on the tmRNA; the nascent peptide is terminated with the 'tag peptide' encoded by the tmRNA and targeted for degradation. The ribosome is freed to recommence translation, which seems to be the essential function of trans-translation. The polypeptide is SsrA-binding protein (Xanthomonas axonopodis pv. citri (strain 306)).